The primary structure comprises 323 residues: Beta-ketoacyl-[acyl-carrier-protein] synthase III (323 aa).

Active-site residues include Cys114 and His250. The ACP-binding stretch occupies residues 251–255 (QANIR). Asn280 is an active-site residue.

Belongs to the thiolase-like superfamily. FabH family. Homodimer.

The protein resides in the cytoplasm. It carries out the reaction malonyl-[ACP] + acetyl-CoA + H(+) = 3-oxobutanoyl-[ACP] + CO2 + CoA. Its pathway is lipid metabolism; fatty acid biosynthesis. In terms of biological role, catalyzes the condensation reaction of fatty acid synthesis by the addition to an acyl acceptor of two carbons from malonyl-ACP. Catalyzes the first condensation reaction which initiates fatty acid synthesis and may therefore play a role in governing the total rate of fatty acid production. Possesses both acetoacetyl-ACP synthase and acetyl transacylase activities. Its substrate specificity determines the biosynthesis of branched-chain and/or straight-chain of fatty acids. In Alkalilimnicola ehrlichii (strain ATCC BAA-1101 / DSM 17681 / MLHE-1), this protein is Beta-ketoacyl-[acyl-carrier-protein] synthase III.